The primary structure comprises 315 residues: MSFSSKVKGEICRYIDISKEEALAEISAIMKVSGTLAFSGSGLSFKMTTENPASARLIFTLLKDHFNIHSKLMVKKSNSLKKNNIYMVVISEEMGVRGLLSDTGILKEIDGIMSLDYRIEEYIFKDEDIKRAYIRGAFIGGGSISNPEKTYHLEFVTHSEEYAKDLSNLINTFSLNSKVIQRKNSFIVYIKEGEQIVDLLNVIGAHSSLLEIENIRIMKEMRNNVNRLVNCETANLSKTVNAAVRQVESIKLIQSQIGMQRLPDNLREIAELRLNYPDESLKELGEMLDPPVGKSGINHRLRKIEKIAEELRTSK.

A DNA-binding region (H-T-H motif) is located at residues 280-313 (SLKELGEMLDPPVGKSGINHRLRKIEKIAEELRT).

Belongs to the WhiA family.

In terms of biological role, involved in cell division and chromosome segregation. The protein is Probable cell division protein WhiA of Clostridium beijerinckii (strain ATCC 51743 / NCIMB 8052) (Clostridium acetobutylicum).